We begin with the raw amino-acid sequence, 432 residues long: MANVVVVGSQWGDEGKGKIVDWLSERADVVVRFQGGHNAGHTLVVDGKVYKLSLLPSGVVRQGKLSIIGNGVVFDPHAFVAEVAKLKAQGVEVTPDRLKIAENTALILSLHRELDGFREDAASNSGTKIGTTRRGIGPAYEDKVGRRAVRVMDLADLETLPLKVDRLLTHHNALRRGLGHGEVTHDAIMAELTSVADEILPYMDRVWKILDDKRRAGERILFEGAQGTLLDIDHGTYPFVTSSNTVAGQAAAGSGVGPGAIGYVLGITKAYTTRVGEGPFPTEQKNEIGEFLGTRGHEFGVVTGRKRRCGWFDAVLVRQAVAVNGIKGIALTKLDVLDGLDEIKVCTGYRLDGEMIDYLPASQGAQARVEPVYETLEGWKGTTAGARSWNDLPAQAVKYVRYIEELIGAPVALLSTSPERDDTILVTDPFQD.

Residues 12–18 and 40–42 each bind GTP; these read GDEGKGK and GHT. Catalysis depends on D13, which acts as the Proton acceptor. D13 and G40 together coordinate Mg(2+). IMP is bound by residues 13 to 16, 38 to 41, T132, R146, Q226, T241, and R305; these read DEGK and NAGH. H41 (proton donor) is an active-site residue. Residue 301 to 307 coordinates substrate; sequence VVTGRKR. GTP is bound by residues R307, 333 to 335, and 415 to 417; these read KLD and STS.

This sequence belongs to the adenylosuccinate synthetase family. In terms of assembly, homodimer. The cofactor is Mg(2+).

Its subcellular location is the cytoplasm. The catalysed reaction is IMP + L-aspartate + GTP = N(6)-(1,2-dicarboxyethyl)-AMP + GDP + phosphate + 2 H(+). It functions in the pathway purine metabolism; AMP biosynthesis via de novo pathway; AMP from IMP: step 1/2. Its function is as follows. Plays an important role in the de novo pathway of purine nucleotide biosynthesis. Catalyzes the first committed step in the biosynthesis of AMP from IMP. This chain is Adenylosuccinate synthetase, found in Mesorhizobium japonicum (strain LMG 29417 / CECT 9101 / MAFF 303099) (Mesorhizobium loti (strain MAFF 303099)).